Reading from the N-terminus, the 64-residue chain is Small ribosomal subunit protein eS17 (64 aa).

It belongs to the eukaryotic ribosomal protein eS17 family.

The sequence is that of Small ribosomal subunit protein eS17 from Methanosarcina barkeri (strain Fusaro / DSM 804).